Reading from the N-terminus, the 166-residue chain is S-phase kinase-associated protein 1 homolog (166 aa).

An interaction with the F-box domain of F-box proteins region spans residues 105-166 (ILAANYLDIK…ENKWAEEATS (62 aa)).

The protein belongs to the SKP1 family. As to quaternary structure, component of multiple SCF (SKP1-CUL1-F-box) E3 ubiquitin-protein ligase complexes formed of CUL1, SKP1, RBX1 and a variable F-box domain-containing protein as substrate-specific subunit.

It participates in protein modification; protein ubiquitination. Functionally, essential component of the SCF (SKP1-CUL1-F-box protein) ubiquitin ligase complex, which mediates the ubiquitination of proteins involved in cell cycle progression, signal transduction and transcription. In the SCF complex, serves as an adapter that links the F-box protein to CUL1. The functional specificity of the SCF complex depends on the F-box protein as substrate recognition component. Its association with the holoenzyme telomerase ribonucleoprotein complex suggests that it may play a role in turnover of holoenzyme telomerase complex components. The polypeptide is S-phase kinase-associated protein 1 homolog (Tetrahymena thermophila (strain SB210)).